We begin with the raw amino-acid sequence, 290 residues long: uncharacterized protein (290 aa).

This sequence belongs to the UreD family.

It is found in the cytoplasm. It localises to the nucleus. Functionally, probably facilitates nickel incorporation. This is an uncharacterized protein from Schizosaccharomyces pombe (strain 972 / ATCC 24843) (Fission yeast).